Reading from the N-terminus, the 467-residue chain is Glutamate--tRNA ligase (467 aa).

A 'HIGH' region motif is present at residues P9–G19. The 'KMSKS' region motif lies at K250 to R254. An ATP-binding site is contributed by K253.

It belongs to the class-I aminoacyl-tRNA synthetase family. Glutamate--tRNA ligase type 1 subfamily. As to quaternary structure, monomer.

It is found in the cytoplasm. The catalysed reaction is tRNA(Glu) + L-glutamate + ATP = L-glutamyl-tRNA(Glu) + AMP + diphosphate. Catalyzes the attachment of glutamate to tRNA(Glu) in a two-step reaction: glutamate is first activated by ATP to form Glu-AMP and then transferred to the acceptor end of tRNA(Glu). This chain is Glutamate--tRNA ligase, found in Mesomycoplasma hyopneumoniae (strain 7448) (Mycoplasma hyopneumoniae).